The primary structure comprises 517 residues: MAVSRRRGPQAGAQSFFCALLLSFSQFVGSDGMGGDAAAPGAAGTQAELPHRRFEYKYSFKGPHLVQSDGTVPFWAHAGNAIPSADQIRIAPSLKSQRGSVWTKTKAAFENWEVEVTFRVTGRGRIGADGLAIWYTENQGLDGPVFGSADMWNGVGIFFDSFDNDGKKNNPAIVVVGNNGQINYDHQNDGATQALASCQRDFRNKPYPVRAKITYYQKTLTVMINNGFTPDKNDYEFCAKVENMVIPTQGHFGISAATGGLADDHDVLSFLTFQLTEPGKEPPTPEKDISEKEKEKYQEEFEHFQQELDKKKEEFQKGHPDLQGQPADDIFESIGDRELRQVFEGQNRIHLEIKQLNRQLDMILDEQRRYVSSLTEEISRRGAGTPGQPGQVSQQELDTVVRTQLEILRQVNEMKNSMRETMRLVSGVQHPGSAGVYETTQHFMDIKEHLHIVKRDIDSLAQRSMSSNEKPKCPDLPAFPSCLSTVHFVIFIVVQTVLFIGYIMYRTQQEAAAKKFF.

The signal sequence occupies residues 1–30 (MAVSRRRGPQAGAQSFFCALLLSFSQFVGS). The Lumenal portion of the chain corresponds to 31 to 484 (DGMGGDAAAP…DLPAFPSCLS (454 aa)). Residues 52-275 (RRFEYKYSFK…DVLSFLTFQL (224 aa)) form the L-type lectin-like domain. Positions 96 and 129 each coordinate a carbohydrate. D160, F162, D163, N164, D165, N169, and N170 together coordinate Ca(2+). Residue N164 participates in a carbohydrate binding. H186 serves as a coordination point for a carbohydrate. Position 189 (D189) interacts with Ca(2+). Cysteines 198 and 238 form a disulfide. Residue 259 to 261 (GGL) coordinates a carbohydrate. 2 disordered regions span residues 276 to 297 (TEPG…KEKY) and 377 to 396 (EISR…SQQE). Basic and acidic residues predominate over residues 278–297 (PGKEPPTPEKDISEKEKEKY). Phosphoserine is present on S433. A helical membrane pass occupies residues 485 to 505 (TVHFVIFIVVQTVLFIGYIMY). Over 506-517 (RTQQEAAAKKFF) the chain is Cytoplasmic. Residues 506-517 (RTQQEAAAKKFF) are mediates interaction with RAB3GAP1, RAB3GAP2 and UBXN6. Residues 516–517 (FF) carry the ER export motif motif.

As to quaternary structure, exists both as a covalent disulfide-linked homohexamer, and a complex of three disulfide-linked dimers non-covalently kept together. Interacts with MCFD2. May interact with TMEM115. Interacts with RAB3GAP1 and RAB3GAP2. Interacts with UBXN6. Interacts with SERPINA1/alpha1-antitrypsin. Interacts with BET1.

It is found in the endoplasmic reticulum-Golgi intermediate compartment membrane. The protein localises to the golgi apparatus membrane. Its subcellular location is the endoplasmic reticulum membrane. Functionally, mannose-specific lectin. May recognize sugar residues of glycoproteins, glycolipids, or glycosylphosphatidyl inositol anchors and may be involved in the sorting or recycling of proteins, lipids, or both. The LMAN1-MCFD2 complex forms a specific cargo receptor for the ER-to-Golgi transport of selected proteins. The chain is Protein ERGIC-53 (Lman1) from Rattus norvegicus (Rat).